Reading from the N-terminus, the 450-residue chain is Phosphoglucosamine mutase (450 aa).

The Phosphoserine intermediate role is filled by S103. Mg(2+) is bound by residues S103, D243, D245, and D247. The residue at position 103 (S103) is a Phosphoserine.

The protein belongs to the phosphohexose mutase family. Mg(2+) serves as cofactor. Activated by phosphorylation.

It carries out the reaction alpha-D-glucosamine 1-phosphate = D-glucosamine 6-phosphate. Catalyzes the conversion of glucosamine-6-phosphate to glucosamine-1-phosphate. This is Phosphoglucosamine mutase from Lactobacillus delbrueckii subsp. bulgaricus (strain ATCC BAA-365 / Lb-18).